The chain runs to 242 residues: Glucosamine-6-phosphate deaminase (242 aa).

Catalysis depends on Asp-67, which acts as the Proton acceptor; for enolization step. The active-site For ring-opening step is the Asn-136. The Proton acceptor; for ring-opening step role is filled by His-138. The active-site For ring-opening step is Glu-143.

It belongs to the glucosamine/galactosamine-6-phosphate isomerase family. NagB subfamily.

The catalysed reaction is alpha-D-glucosamine 6-phosphate + H2O = beta-D-fructose 6-phosphate + NH4(+). It functions in the pathway amino-sugar metabolism; N-acetylneuraminate degradation; D-fructose 6-phosphate from N-acetylneuraminate: step 5/5. In terms of biological role, catalyzes the reversible isomerization-deamination of glucosamine 6-phosphate (GlcN6P) to form fructose 6-phosphate (Fru6P) and ammonium ion. This chain is Glucosamine-6-phosphate deaminase, found in Clostridium beijerinckii (strain ATCC 51743 / NCIMB 8052) (Clostridium acetobutylicum).